Reading from the N-terminus, the 215-residue chain is Ribose-5-phosphate isomerase A (215 aa).

Substrate-binding positions include 26–29, 79–82, and 92–95; these read TGST, DGAD, and KGGG. Glu-101 functions as the Proton acceptor in the catalytic mechanism. Residue Lys-119 coordinates substrate.

This sequence belongs to the ribose 5-phosphate isomerase family. As to quaternary structure, homodimer.

It carries out the reaction aldehydo-D-ribose 5-phosphate = D-ribulose 5-phosphate. Its pathway is carbohydrate degradation; pentose phosphate pathway; D-ribose 5-phosphate from D-ribulose 5-phosphate (non-oxidative stage): step 1/1. Its function is as follows. Catalyzes the reversible conversion of ribose-5-phosphate to ribulose 5-phosphate. The sequence is that of Ribose-5-phosphate isomerase A from Stenotrophomonas maltophilia (strain R551-3).